A 189-amino-acid polypeptide reads, in one-letter code: Ribosome maturation factor RimM (189 aa).

In terms of domain architecture, PRC barrel spans 113–189 (DGEYYWVDLL…TIVADWQPDY (77 aa)).

It belongs to the RimM family. As to quaternary structure, binds ribosomal protein uS19.

The protein localises to the cytoplasm. In terms of biological role, an accessory protein needed during the final step in the assembly of 30S ribosomal subunit, possibly for assembly of the head region. Essential for efficient processing of 16S rRNA. May be needed both before and after RbfA during the maturation of 16S rRNA. It has affinity for free ribosomal 30S subunits but not for 70S ribosomes. This is Ribosome maturation factor RimM from Delftia acidovorans (strain DSM 14801 / SPH-1).